Reading from the N-terminus, the 210-residue chain is dTTP/UTP pyrophosphatase (210 aa).

Asp-85 serves as the catalytic Proton acceptor.

Belongs to the Maf family. YhdE subfamily. Requires a divalent metal cation as cofactor.

The protein localises to the cytoplasm. The catalysed reaction is dTTP + H2O = dTMP + diphosphate + H(+). It catalyses the reaction UTP + H2O = UMP + diphosphate + H(+). Nucleoside triphosphate pyrophosphatase that hydrolyzes dTTP and UTP. May have a dual role in cell division arrest and in preventing the incorporation of modified nucleotides into cellular nucleic acids. The sequence is that of dTTP/UTP pyrophosphatase from Saccharophagus degradans (strain 2-40 / ATCC 43961 / DSM 17024).